The sequence spans 255 residues: F-box/SPRY domain-containing protein 1 (255 aa).

The F-box domain occupies 3-51 (DPVAALCNYNVLEVIFSYLELDDLSHCSQVCKSWNLFLNDENSDVWRWH). The region spanning 61 to 253 (LKSDLLSSVS…VSMVYLGTPM (193 aa)) is the B30.2/SPRY domain.

This sequence belongs to the FBXO45/Fsn family. As to quaternary structure, component of an E3 ubiquitin ligase complex composed of hiw and Fsn.

Its subcellular location is the synapse. Its pathway is protein modification; protein ubiquitination. Required in the presynaptic motoneuron to down-regulate the levels of wnd and restrain synaptic terminal growth at the neuromuscular junction (NMJ). The chain is F-box/SPRY domain-containing protein 1 from Drosophila ananassae (Fruit fly).